Reading from the N-terminus, the 102-residue chain is MYAIIKTGGKQYKVEAGQAIYVEKLTAEAGEKVTFDQVILVGGETTKVGTPNIDGVTVDGTVEKQGREKKVVTFKYKPKKHSHQKKGHRQPYTKVMIDAINA.

It belongs to the bacterial ribosomal protein bL21 family. In terms of assembly, part of the 50S ribosomal subunit. Contacts protein L20.

Functionally, this protein binds to 23S rRNA in the presence of protein L20. This is Large ribosomal subunit protein bL21 from Latilactobacillus sakei subsp. sakei (strain 23K) (Lactobacillus sakei subsp. sakei).